The primary structure comprises 131 residues: Small ribosomal subunit protein uS8 (131 aa).

This sequence belongs to the universal ribosomal protein uS8 family. Part of the 30S ribosomal subunit. Contacts proteins S5 and S12.

In terms of biological role, one of the primary rRNA binding proteins, it binds directly to 16S rRNA central domain where it helps coordinate assembly of the platform of the 30S subunit. This chain is Small ribosomal subunit protein uS8, found in Finegoldia magna (strain ATCC 29328 / DSM 20472 / WAL 2508) (Peptostreptococcus magnus).